The chain runs to 162 residues: Transcription elongation factor GreA (162 aa).

A coiled-coil region spans residues 45 to 74 (ENAEYEAAREKQAFIEGRIKELEDMTARAE).

It belongs to the GreA/GreB family.

Functionally, necessary for efficient RNA polymerase transcription elongation past template-encoded arresting sites. The arresting sites in DNA have the property of trapping a certain fraction of elongating RNA polymerases that pass through, resulting in locked ternary complexes. Cleavage of the nascent transcript by cleavage factors such as GreA or GreB allows the resumption of elongation from the new 3'terminus. GreA releases sequences of 2 to 3 nucleotides. In Rickettsia prowazekii (strain Madrid E), this protein is Transcription elongation factor GreA.